The primary structure comprises 200 residues: Elongation factor Ts (200 aa).

Residues 81-84 (TDFV) form an involved in Mg(2+) ion dislocation from EF-Tu region.

It belongs to the EF-Ts family.

It localises to the cytoplasm. Associates with the EF-Tu.GDP complex and induces the exchange of GDP to GTP. It remains bound to the aminoacyl-tRNA.EF-Tu.GTP complex up to the GTP hydrolysis stage on the ribosome. The protein is Elongation factor Ts of Nitratidesulfovibrio vulgaris (strain DSM 19637 / Miyazaki F) (Desulfovibrio vulgaris).